The sequence spans 100 residues: NAD(P)H-quinone oxidoreductase subunit 4L, chloroplastic (100 aa).

Helical transmembrane passes span 1–21 (MLEH…FGLI), 29–49 (ALMC…TFSN), and 60–80 (IFAI…LAIV).

Belongs to the complex I subunit 4L family. As to quaternary structure, NDH is composed of at least 16 different subunits, 5 of which are encoded in the nucleus.

Its subcellular location is the plastid. The protein localises to the chloroplast thylakoid membrane. It carries out the reaction a plastoquinone + NADH + (n+1) H(+)(in) = a plastoquinol + NAD(+) + n H(+)(out). The catalysed reaction is a plastoquinone + NADPH + (n+1) H(+)(in) = a plastoquinol + NADP(+) + n H(+)(out). In terms of biological role, NDH shuttles electrons from NAD(P)H:plastoquinone, via FMN and iron-sulfur (Fe-S) centers, to quinones in the photosynthetic chain and possibly in a chloroplast respiratory chain. The immediate electron acceptor for the enzyme in this species is believed to be plastoquinone. Couples the redox reaction to proton translocation, and thus conserves the redox energy in a proton gradient. This chain is NAD(P)H-quinone oxidoreductase subunit 4L, chloroplastic, found in Physcomitrium patens (Spreading-leaved earth moss).